Here is a 261-residue protein sequence, read N- to C-terminus: Phosphoadenosine phosphosulfate reductase (261 aa).

Belongs to the PAPS reductase family. CysH subfamily.

It carries out the reaction [thioredoxin]-disulfide + sulfite + adenosine 3',5'-bisphosphate + 2 H(+) = [thioredoxin]-dithiol + 3'-phosphoadenylyl sulfate. The protein operates within sulfur metabolism; hydrogen sulfide biosynthesis; sulfite from sulfate: step 3/3. In terms of biological role, the NADP dependent reduction of PAPS into sulfite involves thioredoxin which probably plays the role of a thiol carrier. This chain is Phosphoadenosine phosphosulfate reductase (MET16), found in Saccharomyces cerevisiae (strain ATCC 204508 / S288c) (Baker's yeast).